A 101-amino-acid polypeptide reads, in one-letter code: Large ribosomal subunit protein bL9m (101 aa).

The transit peptide at 1 to 32 directs the protein to the mitochondrion; it reads MSIMKPTTRFFRFNSLELAVSPFQRIYGQLRF.

The protein belongs to the bacterial ribosomal protein bL9 family. Component of the mitochondrial large ribosomal subunit (mt-LSU). Mature yeast 74S mitochondrial ribosomes consist of a small (37S) and a large (54S) subunit. The 37S small subunit contains a 15S ribosomal RNA (15S mt-rRNA) and at least 32 different proteins. The 54S large subunit contains a 21S rRNA (21S mt-rRNA) and at least 45 different proteins.

The protein resides in the mitochondrion. Its function is as follows. Component of the mitochondrial ribosome (mitoribosome), a dedicated translation machinery responsible for the synthesis of mitochondrial genome-encoded proteins, including at least some of the essential transmembrane subunits of the mitochondrial respiratory chain. The mitoribosomes are attached to the mitochondrial inner membrane and translation products are cotranslationally integrated into the membrane. In Schizosaccharomyces pombe (strain 972 / ATCC 24843) (Fission yeast), this protein is Large ribosomal subunit protein bL9m.